Reading from the N-terminus, the 396-residue chain is Ribosomal RNA large subunit methyltransferase I (396 aa).

Residues 2–79 (AVRIKLKPGR…REEEIDREFF (78 aa)) enclose the PUA domain.

The protein belongs to the methyltransferase superfamily. RlmI family.

The protein resides in the cytoplasm. It carries out the reaction cytidine(1962) in 23S rRNA + S-adenosyl-L-methionine = 5-methylcytidine(1962) in 23S rRNA + S-adenosyl-L-homocysteine + H(+). Functionally, specifically methylates the cytosine at position 1962 (m5C1962) of 23S rRNA. This Shewanella sp. (strain MR-4) protein is Ribosomal RNA large subunit methyltransferase I.